The following is a 368-amino-acid chain: Agmatine deiminase (368 aa).

The active-site Amidino-cysteine intermediate is Cys357.

It belongs to the agmatine deiminase family. In terms of assembly, homodimer.

It catalyses the reaction agmatine + H2O = N-carbamoylputrescine + NH4(+). It participates in amine and polyamine biosynthesis; putrescine biosynthesis via agmatine pathway; N-carbamoylputrescine from agmatine: step 1/1. Its function is as follows. Mediates the hydrolysis of agmatine into N-carbamoylputrescine in the arginine decarboxylase (ADC) pathway of putrescine biosynthesis, a basic polyamine. In Pseudomonas aeruginosa (strain LESB58), this protein is Agmatine deiminase.